A 530-amino-acid chain; its full sequence is Glucose-6-phosphate isomerase (530 aa).

Glutamate 322 functions as the Proton donor in the catalytic mechanism. Residues histidine 351 and lysine 455 contribute to the active site.

This sequence belongs to the GPI family.

It localises to the cytoplasm. It carries out the reaction alpha-D-glucose 6-phosphate = beta-D-fructose 6-phosphate. It participates in carbohydrate biosynthesis; gluconeogenesis. The protein operates within carbohydrate degradation; glycolysis; D-glyceraldehyde 3-phosphate and glycerone phosphate from D-glucose: step 2/4. Its function is as follows. Catalyzes the reversible isomerization of glucose-6-phosphate to fructose-6-phosphate. The chain is Glucose-6-phosphate isomerase from Geotalea daltonii (strain DSM 22248 / JCM 15807 / FRC-32) (Geobacter daltonii).